Here is a 111-residue protein sequence, read N- to C-terminus: Large ribosomal subunit protein eL31 (111 aa).

Belongs to the eukaryotic ribosomal protein eL31 family.

The chain is Large ribosomal subunit protein eL31 (RPL31) from Encephalitozoon cuniculi (strain GB-M1) (Microsporidian parasite).